Here is a 107-residue protein sequence, read N- to C-terminus: Iron-sulfur cluster assembly protein CyaY (107 aa).

The protein belongs to the frataxin family.

Its function is as follows. Involved in iron-sulfur (Fe-S) cluster assembly. May act as a regulator of Fe-S biogenesis. The protein is Iron-sulfur cluster assembly protein CyaY of Neisseria meningitidis serogroup B (strain ATCC BAA-335 / MC58).